Here is a 475-residue protein sequence, read N- to C-terminus: Ribulose bisphosphate carboxylase large chain (475 aa).

Positions 1–2 are excised as a propeptide; sequence MS. Proline 3 carries the N-acetylproline modification. Lysine 14 carries the post-translational modification N6,N6,N6-trimethyllysine. Positions 123 and 173 each coordinate substrate. Lysine 175 serves as the catalytic Proton acceptor. Residue lysine 177 coordinates substrate. Mg(2+) contacts are provided by lysine 201, aspartate 203, and glutamate 204. The residue at position 201 (lysine 201) is an N6-carboxylysine. The Proton acceptor role is filled by histidine 294. The substrate site is built by arginine 295, histidine 327, and serine 379.

It belongs to the RuBisCO large chain family. Type I subfamily. In terms of assembly, heterohexadecamer of 8 large chains and 8 small chains; disulfide-linked. The disulfide link is formed within the large subunit homodimers. The cofactor is Mg(2+). In terms of processing, the disulfide bond which can form in the large chain dimeric partners within the hexadecamer appears to be associated with oxidative stress and protein turnover.

The protein resides in the plastid. It localises to the chloroplast. It catalyses the reaction 2 (2R)-3-phosphoglycerate + 2 H(+) = D-ribulose 1,5-bisphosphate + CO2 + H2O. The catalysed reaction is D-ribulose 1,5-bisphosphate + O2 = 2-phosphoglycolate + (2R)-3-phosphoglycerate + 2 H(+). In terms of biological role, ruBisCO catalyzes two reactions: the carboxylation of D-ribulose 1,5-bisphosphate, the primary event in carbon dioxide fixation, as well as the oxidative fragmentation of the pentose substrate in the photorespiration process. Both reactions occur simultaneously and in competition at the same active site. This Magnolia macrophylla (Bigleaf magnolia) protein is Ribulose bisphosphate carboxylase large chain.